A 167-amino-acid chain; its full sequence is NAD(P)H-quinone oxidoreductase subunit I, chloroplastic (167 aa).

4Fe-4S ferredoxin-type domains follow at residues 55 to 84 (GRIHFEFDKCIACEVCVRVCPIDLPVVDWK) and 95 to 124 (LNYSIDFGICIFCGNCVEYCPTNCLSMTEE). Residues cysteine 64, cysteine 67, cysteine 70, cysteine 74, cysteine 104, cysteine 107, cysteine 110, and cysteine 114 each contribute to the [4Fe-4S] cluster site.

Belongs to the complex I 23 kDa subunit family. NDH is composed of at least 16 different subunits, 5 of which are encoded in the nucleus. It depends on [4Fe-4S] cluster as a cofactor.

Its subcellular location is the plastid. It is found in the chloroplast thylakoid membrane. It carries out the reaction a plastoquinone + NADH + (n+1) H(+)(in) = a plastoquinol + NAD(+) + n H(+)(out). The enzyme catalyses a plastoquinone + NADPH + (n+1) H(+)(in) = a plastoquinol + NADP(+) + n H(+)(out). Its function is as follows. NDH shuttles electrons from NAD(P)H:plastoquinone, via FMN and iron-sulfur (Fe-S) centers, to quinones in the photosynthetic chain and possibly in a chloroplast respiratory chain. The immediate electron acceptor for the enzyme in this species is believed to be plastoquinone. Couples the redox reaction to proton translocation, and thus conserves the redox energy in a proton gradient. The sequence is that of NAD(P)H-quinone oxidoreductase subunit I, chloroplastic from Pelargonium hortorum (Common geranium).